A 154-amino-acid polypeptide reads, in one-letter code: Myoglobin (154 aa).

The region spanning 2–148 (VLTDAEWHLV…FRKDIAAKYK (147 aa)) is the Globin domain. Residue H65 coordinates nitrite. Position 65 (H65) interacts with O2. The residue at position 68 (T68) is a Phosphothreonine. A heme b-binding site is contributed by H94.

The protein belongs to the globin family. Monomeric.

It is found in the cytoplasm. The protein resides in the sarcoplasm. It carries out the reaction Fe(III)-heme b-[protein] + nitric oxide + H2O = Fe(II)-heme b-[protein] + nitrite + 2 H(+). The catalysed reaction is H2O2 + AH2 = A + 2 H2O. In terms of biological role, monomeric heme protein which primary function is to store oxygen and facilitate its diffusion within muscle tissues. Reversibly binds oxygen through a pentacoordinated heme iron and enables its timely and efficient release as needed during periods of heightened demand. Depending on the oxidative conditions of tissues and cells, and in addition to its ability to bind oxygen, it also has a nitrite reductase activity whereby it regulates the production of bioactive nitric oxide. Under stress conditions, like hypoxia and anoxia, it also protects cells against reactive oxygen species thanks to its pseudoperoxidase activity. The chain is Myoglobin (MB) from Balaenoptera physalus (Fin whale).